Here is a 212-residue protein sequence, read N- to C-terminus: Octanoyltransferase (212 aa).

Positions E30 to Q205 constitute a BPL/LPL catalytic domain. Substrate is bound by residues R69–H76, S136–G138, and G149–A151. Catalysis depends on C167, which acts as the Acyl-thioester intermediate.

It belongs to the LipB family.

It localises to the cytoplasm. It carries out the reaction octanoyl-[ACP] + L-lysyl-[protein] = N(6)-octanoyl-L-lysyl-[protein] + holo-[ACP] + H(+). The protein operates within protein modification; protein lipoylation via endogenous pathway; protein N(6)-(lipoyl)lysine from octanoyl-[acyl-carrier-protein]: step 1/2. Catalyzes the transfer of endogenously produced octanoic acid from octanoyl-acyl-carrier-protein onto the lipoyl domains of lipoate-dependent enzymes. Lipoyl-ACP can also act as a substrate although octanoyl-ACP is likely to be the physiological substrate. This chain is Octanoyltransferase, found in Marinobacter nauticus (strain ATCC 700491 / DSM 11845 / VT8) (Marinobacter aquaeolei).